The following is a 346-amino-acid chain: NADH-quinone oxidoreductase subunit H 2 (346 aa).

8 helical membrane-spanning segments follow: residues 14–34 (IAMV…VAYA), 83–103 (FAFL…FAVI), 136–156 (VGVL…VLAG), 172–192 (SAQM…VFML), 208–228 (GAWY…CSIA), 260–280 (FFMA…TLFL), 289–309 (LPGW…CMWI), and 324–344 (LGWK…GIIV).

It belongs to the complex I subunit 1 family. As to quaternary structure, NDH-1 is composed of 14 different subunits. Subunits NuoA, H, J, K, L, M, N constitute the membrane sector of the complex.

It localises to the cell inner membrane. The enzyme catalyses a quinone + NADH + 5 H(+)(in) = a quinol + NAD(+) + 4 H(+)(out). Functionally, NDH-1 shuttles electrons from NADH, via FMN and iron-sulfur (Fe-S) centers, to quinones in the respiratory chain. The immediate electron acceptor for the enzyme in this species is believed to be ubiquinone. Couples the redox reaction to proton translocation (for every two electrons transferred, four hydrogen ions are translocated across the cytoplasmic membrane), and thus conserves the redox energy in a proton gradient. This subunit may bind ubiquinone. This chain is NADH-quinone oxidoreductase subunit H 2, found in Geobacter metallireducens (strain ATCC 53774 / DSM 7210 / GS-15).